We begin with the raw amino-acid sequence, 156 residues long: Endogenous retrovirus group K member 113 Pro protein (156 aa).

The 76-residue stretch at 21–96 folds into the Peptidase A2 domain; that stretch reads FEGLVDTGAD…IPLNLWGRDL (76 aa). Residue Asp26 is part of the active site. The 46-residue stretch at 111–156 folds into the G-patch domain; that stretch reads YSPTSQKIMTKMGYIPGKGLGKNEDGIKIPVEAKINQKREGIGYPF.

The protein belongs to the peptidase A2 family. HERV class-II K(HML-2) subfamily. In terms of assembly, active as a homodimer. Autoproteolytically processed at the N-terminus. Expected C-terminal autoprocessing not detected. The sequence shown is that of the processed Pro protein.

The catalysed reaction is Processing at the authentic HIV-1 PR recognition site and release of the mature p17 matrix and the p24 capsid protein, as a result of the cleavage of the -SQNY-|-PIVQ- cleavage site.. In terms of biological role, retroviral proteases have roles in the processing of the primary translation products and the maturation of the viral particle. Endogenous Pro proteins may have kept, lost or modified their original function during evolution. In Homo sapiens (Human), this protein is Endogenous retrovirus group K member 113 Pro protein (HERVK_113).